Consider the following 161-residue polypeptide: Trivalent organoarsenical cleaving enzyme (161 aa).

Residues 2–119 (KYAHVGLNVT…DGNEWEFFYT (118 aa)) enclose the VOC domain. Fe(2+) contacts are provided by H5 and H62. Residues C96 and C97 each contribute to the roxarsone (III) site. E115 contacts Fe(2+).

Fe(2+) is required as a cofactor.

It catalyses the reaction methylarsonous acid + AH2 + O2 = arsenite + methanol + A + H(+). The catalysed reaction is roxarsone (III) + AH2 + O2 = 4-hydroxy-3-nitrocyclohexa-2,5-dien-1-one + arsenite + A + H(+). It carries out the reaction nitarsone (III) + AH2 + O2 = 4-nitrocyclohexa-2,5-dien-1-one + arsenite + A + H(+). The enzyme catalyses 4-aminophenylarsonous acid + AH2 + O2 = 4-aminocyclohexa-2,5-dien-1-one + arsenite + A. With respect to regulation, inhibited in vitro by reagents that chemically modify histidine residues (diethylpyrocarbonate (DEPC)), aspartate or glutamate residues (1-ethyl-3-(3-(dimethylamino)propyl) carbodiimide (EDC)), or cysteine residues (N-ethylmaleimide (NEM) or iodoacetamide (IAA)). Functionally, nonheme iron-dependent dioxygenase that can break carbon-arsenic bonds, playing a role in the detoxification of environmental organoarsenical compounds. Catalyzes the oxygen-dependent demethylation of highly toxic methylarsonous acid (MAs(III)) to arsenite, which can then be exported out of the cell. Can also cleave the C-As bond in several trivalent aromatic arsenicals, including roxarsone (III), nitarsone (III) and (4-aminophenyl)arsonous acid. Organoarsenical degradation by this enzyme is proposed to have a significant impact on the arsenic biogeocycle that maintains a balance between organic and inorganic species. In Bacillus sp. (strain MD1), this protein is Trivalent organoarsenical cleaving enzyme.